The following is a 566-amino-acid chain: Oxygen-dependent choline dehydrogenase (566 aa).

7-36 (DYIICGAGSAGNVLATRLTEDPDVTVLLLE) provides a ligand contact to FAD. A disordered region spans residues 180–202 (NGYQQEGFGPMDRTVTPKGRRAS). His474 (proton acceptor) is an active-site residue.

The protein belongs to the GMC oxidoreductase family. FAD serves as cofactor.

The enzyme catalyses choline + A = betaine aldehyde + AH2. It catalyses the reaction betaine aldehyde + NAD(+) + H2O = glycine betaine + NADH + 2 H(+). The protein operates within amine and polyamine biosynthesis; betaine biosynthesis via choline pathway; betaine aldehyde from choline (cytochrome c reductase route): step 1/1. Its function is as follows. Involved in the biosynthesis of the osmoprotectant glycine betaine. Catalyzes the oxidation of choline to betaine aldehyde and betaine aldehyde to glycine betaine at the same rate. This chain is Oxygen-dependent choline dehydrogenase, found in Burkholderia lata (strain ATCC 17760 / DSM 23089 / LMG 22485 / NCIMB 9086 / R18194 / 383).